Consider the following 269-residue polypeptide: Hydroxyethylthiazole kinase (269 aa).

Met45 is a substrate binding site. Residues Arg121 and Thr167 each coordinate ATP. Substrate is bound at residue Gly194.

The protein belongs to the Thz kinase family. It depends on Mg(2+) as a cofactor.

The catalysed reaction is 5-(2-hydroxyethyl)-4-methylthiazole + ATP = 4-methyl-5-(2-phosphooxyethyl)-thiazole + ADP + H(+). Its pathway is cofactor biosynthesis; thiamine diphosphate biosynthesis; 4-methyl-5-(2-phosphoethyl)-thiazole from 5-(2-hydroxyethyl)-4-methylthiazole: step 1/1. Catalyzes the phosphorylation of the hydroxyl group of 4-methyl-5-beta-hydroxyethylthiazole (THZ). The polypeptide is Hydroxyethylthiazole kinase (Bacillus licheniformis (strain ATCC 14580 / DSM 13 / JCM 2505 / CCUG 7422 / NBRC 12200 / NCIMB 9375 / NCTC 10341 / NRRL NRS-1264 / Gibson 46)).